The following is an 83-amino-acid chain: Keratin-associated protein 21-2 (83 aa).

As to quaternary structure, interacts with hair keratins.

In the hair cortex, hair keratin intermediate filaments are embedded in an interfilamentous matrix, consisting of hair keratin-associated proteins (KRTAP), which are essential for the formation of a rigid and resistant hair shaft through their extensive disulfide bond cross-linking with abundant cysteine residues of hair keratins. The matrix proteins include the high-sulfur and high-glycine-tyrosine keratins. The protein is Keratin-associated protein 21-2 (KRTAP21-2) of Homo sapiens (Human).